Reading from the N-terminus, the 1922-residue chain is Endoribonuclease Dicer (1922 aa).

In terms of domain architecture, Helicase ATP-binding spans 51-227; sequence LLEAALDHNT…ELEEKIQKLE (177 aa). 64-71 is an ATP binding site; sequence LNTGSGKT. The short motif at 175–178 is the DECH box element; it reads DECH. The required for interaction with PRKRA and TARBP2 stretch occupies residues 256 to 595; sequence DCGPFTDRSG…LRNKCSKSVD (340 aa). The disordered stretch occupies residues 409 to 433; it reads YVSWSDSEDDDEDEEIEEKEKPETN. Phosphoserine is present on residues S413 and S415. Residues 414–425 show a composition bias toward acidic residues; the sequence is DSEDDDEDEEIE. In terms of domain architecture, Helicase C-terminal spans 433 to 602; that stretch reads NFPSPFTNIL…SVDTGETDID (170 aa). Residues 630–722 form the Dicer dsRNA-binding fold domain; the sequence is AIGHINRYCA…MPVGKETVKY (93 aa). A PAZ domain is found at 895–1042; that stretch reads KFMEDIEKSE…LVPELCAIHP (148 aa). 2 positions are modified to phosphoserine: S1016 and S1160. One can recognise an RNase III 1 domain in the interval 1276–1403; the sequence is DSEQSPSIGY…TDKWEKDEMT (128 aa). Mg(2+) is bound by residues E1316, D1395, and E1398. 3 positions are modified to phosphoserine: S1460, S1468, and S1470. An RNase III 2 domain is found at 1666–1824; that stretch reads FENFEKKINY…LAGAIYMDSG (159 aa). Residues E1705, D1810, and E1813 each contribute to the Mg(2+) site. The region spanning 1849–1914 is the DRBM domain; it reads VPRSPVRELL…ARRALRSLKA (66 aa). The residue at position 1868 (S1868) is a Phosphoserine.

This sequence belongs to the helicase family. Dicer subfamily. As to quaternary structure, component of the RISC loading complex (RLC), or micro-RNA (miRNA) loading complex (miRLC), which is composed of DICER1, AGO2 and TARBP2; DICER1 and TARBP2 are required to process precursor miRNAs (pre-miRNAs) to mature miRNAs and then load them onto AGO2. Note that the trimeric RLC/miRLC is also referred to as RISC. Interacts with DHX9, AGO1, PIWIL1 and PRKRA. Associates with the 60S ribosome. Interacts with BCDIN3D. Interacts with AGO2, TARBP2, EIF6, MOV10 and RPL7A (60S ribosome subunit); they form a large RNA-induced silencing complex (RISC). Interacts (via Dicer dsRNA-binding fold domain) with ALOX5 (via PLAT domain); this interaction enhances arachidonate 5-lipoxygenase activity and modifies the miRNA precursor processing activity of DICER1. (Microbial infection) Interacts with ebolavirus transcriptional activator VP30; this interaction prevents TARBP2/TRBP binding to DICER1 and thus allows the virus to counteract host RNA silencing. In terms of assembly, (Microbial infection) Interacts with ebolavirus transcriptional activator VP35; this interaction prevents TARBP2/TRBP binding to DICER1 and thus allows the virus to counteract host RNA silencing. It depends on Mg(2+) as a cofactor. Mn(2+) serves as cofactor.

It is found in the cytoplasm. The protein localises to the perinuclear region. It carries out the reaction Endonucleolytic cleavage to 5'-phosphomonoester.. Its function is as follows. Double-stranded RNA (dsRNA) endoribonuclease playing a central role in short dsRNA-mediated post-transcriptional gene silencing. Cleaves naturally occurring long dsRNAs and short hairpin pre-microRNAs (miRNA) into fragments of twenty-one to twenty-three nucleotides with 3' overhang of two nucleotides, producing respectively short interfering RNAs (siRNA) and mature microRNAs. SiRNAs and miRNAs serve as guide to direct the RNA-induced silencing complex (RISC) to complementary RNAs to degrade them or prevent their translation. Gene silencing mediated by siRNAs, also called RNA interference, controls the elimination of transcripts from mobile and repetitive DNA elements of the genome but also the degradation of exogenous RNA of viral origin for instance. The miRNA pathway on the other side is a mean to specifically regulate the expression of target genes. This is Endoribonuclease Dicer (DICER1) from Homo sapiens (Human).